A 350-amino-acid chain; its full sequence is Renin receptor (350 aa).

The first 17 residues, 1 to 17 (MAVLVVLLSSLVSSALA), serve as a signal peptide directing secretion. Over 18–302 (NEFSILRSPG…YNLAYKYNLE (285 aa)) the chain is Extracellular. A helical transmembrane segment spans residues 303-323 (YSVVFNLVLWIMTGLALAVII). Residues 324–350 (TSYNIWNMDPGYDSIIYRMTNQKIRMD) are Cytoplasmic-facing. Residues 346 to 350 (KIRMD) carry the Mediates retrograde transport to the ER motif.

In terms of assembly, interacts with renin. Accessory component of the multisubunit proton-transporting vacuolar (V)-ATPase protein pump. Interacts (via N-terminus) with ATP6AP1 (via N-terminus). Interacts with ATP6V0D1; ATP6V0D1 is a V-ATPase complex subunit and the interaction promotes V-ATPase complex assembly. Interacts with TMEM9; TMEM9 is a V-ATPase assembly regulator and the interaction induces the interaction with ATP6V0D1. Interacts with VMA21 (via N-terminus); VMA21 is a V-ATPase accessory component. Post-translationally, phosphorylated. Proteolytically cleaved by a furin-like convertase in the trans-Golgi network to generate N- and C-terminal fragments. In terms of tissue distribution, expressed in the brain.

Its subcellular location is the endoplasmic reticulum membrane. The protein localises to the lysosome membrane. It localises to the cytoplasmic vesicle. It is found in the autophagosome membrane. The protein resides in the cell projection. Its subcellular location is the dendritic spine membrane. The protein localises to the axon. It localises to the endosome membrane. It is found in the clathrin-coated vesicle membrane. The protein resides in the secretory vesicle. Its subcellular location is the synaptic vesicle membrane. In terms of biological role, multifunctional protein which functions as a renin, prorenin cellular receptor and is involved in the assembly of the lysosomal proton-transporting V-type ATPase (V-ATPase) and the acidification of the endo-lysosomal system. May mediate renin-dependent cellular responses by activating ERK1 and ERK2. By increasing the catalytic efficiency of renin in AGT/angiotensinogen conversion to angiotensin I, may also play a role in the renin-angiotensin system (RAS). Through its function in V-type ATPase (v-ATPase) assembly and acidification of the lysosome it regulates protein degradation and may control different signaling pathways important for proper brain development, synapse morphology and synaptic transmission. The sequence is that of Renin receptor (Atp6ap2) from Rattus norvegicus (Rat).